The chain runs to 537 residues: Caspase recruitment domain-containing protein 8 (537 aa).

Over residues 1–23 (MEKKECPEKSSSSEEELPRRDSG) the composition is skewed to basic and acidic residues. Disordered stretches follow at residues 1–28 (MEKK…SRNI) and 113–133 (GDIP…SGDI). A ZU5 region spans residues 161–296 (FLGPEGNVDV…FYAVLESPSF (136 aa)). The FIIND domain maps to 161–446 (FLGPEGNVDV…LQLVAASAPP (286 aa)). A UPA region spans residues 297 to 446 (SLMGILLRIA…LQLVAASAPP (150 aa)). Positions 446–536 (PPFSGAAFVK…YLVSYLRQQN (91 aa)) constitute a CARD domain.

Interacts with DPP9; leading to inhibit activation of the inflammasome. DPP9 acts via formation of a ternary complex, composed of a DPP9 homodimer, one full-length CARD8 protein, and one cleaved C-terminus of CARD8 (Caspase recruitment domain-containing protein 8, C-terminus). Interacts with DPP8; leading to inhibit activation of the inflammasome, probably via formation of a ternary complex with DPP8. Interacts with NLRP3. Interacts with IKBKG/NEMO. Interacts with DRAL. Binds to caspase-1 (CASP1), CARD16/pseudo-ICE and CARD18/ICEBERG. Interacts with NLRP2 (via NACHT domain). In terms of assembly, interacts with the C-terminal part of CARD8 (Caspase recruitment domain-containing protein 8, C-terminus) in absence of pathogens and other damage-associated signals. As to quaternary structure, interacts with the N-terminal part of CARD8 (Caspase recruitment domain-containing protein 8, N-terminus) in absence of pathogens and other damage-associated signals. Homomultimer; forms the CARD8 inflammasome polymeric complex, a filament composed of homopolymers of this form in response to pathogens and other damage-associated signals. The CARD8 inflammasome polymeric complex directly recruits pro-caspase-1 (proCASP1) independently of PYCARD/ASC. Interacts (via CARD domain) with CASP1 (via CARD domain); leading to CASP1 activation. Post-translationally, undergoes autocatalytic processing within the FIIND domain to generate the N-terminal and C-terminal parts, which are associated non-covalently in absence of pathogens and other damage-associated signals. Ubiquitinated by the N-end rule pathway in response to pathogens and other damage-associated signals, leading to its degradation by the proteasome and subsequent release of the cleaved C-terminal part of the protein (Caspase recruitment domain-containing protein 8, C-terminus), which polymerizes and forms the CARD8 inflammasome. In terms of processing, (Microbial infection) Proteolytic cleavage by HIV-1 protease in the disordered region and within the ZU5 region of the FIIND domain promotes ubiquitination of the N-terminal part by the N-end rule pathway and degradation by the proteasome, releasing the cleaved C-terminal part of the protein (Caspase recruitment domain-containing protein 8, C-terminus), which polymerizes and forms the CARD8 inflammasome. Post-translationally, undergoes less autocatalytic processing within the FIIND domain compared to isoform 5. High expression in lung, ovary, testis and placenta. Lower expression in heart, kidney and liver. Also expressed in spleen, lymph node and bone marrow.

The protein resides in the cytoplasm. The protein localises to the nucleus. Its subcellular location is the inflammasome. CARD8 inflammasome is activated by HIV-1 protease activity: HIV-1 protease cleaves CARD8, promoting ubiquitination and degradation of the N-terminal part, releasing the cleaved C-terminal part of the protein (Caspase recruitment domain-containing protein 8, C-terminus), which polymerizes and forms the CARD8 inflammasome. CARD8 inflammasome is inhibited by DPP8 and DPP9, which sequester the C-terminal fragment of CARD8 (Caspase recruitment domain-containing protein 8, C-terminus) in a ternary complex, thereby preventing CARD8 oligomerization and activation. CARD8 inflammasome is activated by Val-boroPro (Talabostat, PT-100), an inhibitor of dipeptidyl peptidases DPP8 and DPP9. Val-boroPro relieves inhibition of DPP8 and/or DPP9 by inducing the proteasome-mediated destruction of the N-terminal part of CARD8, releasing its C-terminal part from autoinhibition. Indirectly activated by the pseudodipeptide CQ31. CQ31 directly inactivates the peptidases PEPD and XPNPEP1, leading to an accumulation of dipeptides that weaky inhibit DDP8 and DPP9, relieving DPP8- and/or DPP9-mediated inhibition of CARD8. Its function is as follows. Inflammasome sensor, which mediates inflammasome activation in response to various pathogen-associated signals, leading to subsequent pyroptosis of CD4(+) T-cells and macrophages. Inflammasomes are supramolecular complexes that assemble in the cytosol in response to pathogens and other damage-associated signals and play critical roles in innate immunity and inflammation. Acts as a recognition receptor (PRR): recognizes specific pathogens and other damage-associated signals, such as HIV-1 protease activity or Val-boroPro inhibitor, and mediates CARD8 inflammasome activation. In response to pathogen-associated signals, the N-terminal part of CARD8 is degraded by the proteasome, releasing the cleaved C-terminal part of the protein (Caspase recruitment domain-containing protein 8, C-terminus), which polymerizes to initiate the formation of the inflammasome complex: the CARD8 inflammasome directly recruits pro-caspase-1 (proCASP1) independently of PYCARD/ASC and promotes caspase-1 (CASP1) activation, which subsequently cleaves and activates inflammatory cytokines IL1B and IL18 and gasdermin-D (GSDMD), leading to pyroptosis. Ability to sense HIV-1 protease activity leads to the clearance of latent HIV-1 in patient CD4(+) T-cells after viral reactivation; in contrast, HIV-1 can evade CARD8-sensing when its protease remains inactive in infected cells prior to viral budding. Also acts as a negative regulator of the NLRP3 inflammasome. May also act as an inhibitor of NF-kappa-B activation. Constitutes the precursor of the CARD8 inflammasome, which mediates autoproteolytic processing within the FIIND domain to generate the N-terminal and C-terminal parts, which are associated non-covalently in absence of pathogens and other damage-associated signals. Functionally, regulatory part that prevents formation of the CARD8 inflammasome: in absence of pathogens and other damage-associated signals, interacts with the C-terminal part of CARD8 (Caspase recruitment domain-containing protein 8, C-terminus), preventing activation of the CARD8 inflammasome. In response to pathogen-associated signals, this part is ubiquitinated by the N-end rule pathway and degraded by the proteasome, releasing the cleaved C-terminal part of the protein, which polymerizes and forms the CARD8 inflammasome. In terms of biological role, constitutes the active part of the CARD8 inflammasome. In absence of pathogens and other damage-associated signals, interacts with the N-terminal part of CARD8 (Caspase recruitment domain-containing protein 8, N-terminus), preventing activation of the CARD8 inflammasome. In response to pathogen-associated signals, the N-terminal part of CARD8 is degraded by the proteasome, releasing this form, which polymerizes to form the CARD8 inflammasome complex: the CARD8 inflammasome complex then directly recruits pro-caspase-1 (proCASP1) and promotes caspase-1 (CASP1) activation, leading to gasdermin-D (GSDMD) cleavage and subsequent pyroptosis. The sequence is that of Caspase recruitment domain-containing protein 8 from Homo sapiens (Human).